A 493-amino-acid chain; its full sequence is Trichothecene 8-O-acetyltransferase (493 aa).

Residues 180–191 are compositionally biased toward polar residues; sequence QDQNENEVQQPK. The segment at 180–199 is disordered; the sequence is QDQNENEVQQPKNLPDPDEP.

The protein operates within sesquiterpene biosynthesis; trichothecene biosynthesis. In terms of biological role, trichothecene 8-O-acetyltransferase; part of 2-gene cluster involved in trichothecene C-8 modification that mediates the biosynthesis of T2-toxin. The biosynthesis of trichothecenes begins with the cyclization of farnesyl diphosphate to trichodiene and is catalyzed by the trichodiene synthase TRI5. Trichodiene undergoes a series of oxygenations catalyzed by the cytochrome P450 monooxygenase TRI4. TRI4 controls the addition of four oxygens at C-2, C-3, C-11, and the C-12, C-13-epoxide to form the intermediate isotrichotriol. Isotrichotriol then undergoes a non-enzymatic isomerization and cyclization to form isotrichodermol. During this process, the oxygen at the C-2 position becomes the pyran ring oxygen and the hydroxyl group at C-11 is lost. More complex type A trichothecenes are built by modifying isotrichodermol through a series of paired hydroxylation and acetylation or acylation steps. Isotrichodermol is converted to isotrichodermin by the acetyltransferase TRI101. TRI101 encodes a C-3 transacetylase that acts as a self-protection or resistance factor during biosynthesis and that the presence of a free C-3 hydroxyl group is a key component of Fusarium trichothecene phytotoxicity. A second hydroxyl group is added to C-15 by the trichothecene C-15 hydroxylase TRI11, producing 15-decalonectrin, which is then acetylated by TRI3, producing calonectrin. A third hydroxyl group is added at C-4 by the cytochrome P450 monooxygenase TRI13, converting calonectrin to 3,15-diacetoxyspirpenol, which is subsequently acetylated bythe acetyltransferase TRI7. A fourth hydroxyl group is added to C-8 by the cytochrome P450 monooxygenase TRI1, followed by the addition of an isovaleryl moiety by TRI16. Finally, the acetyl group is removed from the C-3 position by the trichothecene C-3 esterase TRI8 to produce T-2 toxin. The chain is Trichothecene 8-O-acetyltransferase from Fusarium sporotrichioides.